A 304-amino-acid polypeptide reads, in one-letter code: Hairy/enhancer-of-split related with YRPW motif protein 1 (304 aa).

The tract at residues 1–52 (MKRAHPEYSSSESELDETIEVEKESADENGNLSSALGSMSPTTSSQILARKR) is disordered. The segment covering 28 to 47 (ENGNLSSALGSMSPTTSSQI) has biased composition (polar residues). A transcriptional repression and interaction with NCOR1 and SIN3A region spans residues 48 to 117 (LARKRRRGII…GGKGYFDAHA (70 aa)). Residues 49–104 (ARKRRRGIIEKRRRDRINNSLSELRRLVPSAFEKQGSAKLEKAEILQMTVDHLKML) enclose the bHLH domain. Positions 122–158 (YRSLGFRECLAEVARYLSIIEGLDASDPLRVRLVSHL) constitute an Orange domain. Positions 197-211 (SQSTHGNTGTSASPT) are enriched in polar residues. Residues 197–234 (SQSTHGNTGTSASPTESHHQGRLATAHPEASALRAPPS) form a disordered region. The short motif at 294-297 (YRPW) is the YRPW motif element.

Belongs to the HEY family. As to quaternary structure, self-associates. Interacts with HES1 and HEYL. Interacts with HDAC1, NCOR1 and SIN3A. Interacts with GATA4 and GATA6. Interacts with CCDC89/BOIP.

Its subcellular location is the nucleus. In terms of biological role, transcriptional repressor which binds preferentially to the canonical E box sequence 5'-CACGTG-3'. Downstream effector of Notch signaling required for cardiovascular development. Specifically required for the Notch-induced endocardial epithelial to mesenchymal transition, which is itself criticial for cardiac valve and septum development. May be required in conjunction with HEY2 to specify arterial cell fate or identity. Promotes maintenance of neuronal precursor cells and glial versus neuronal fate specification. Represses transcription by the cardiac transcriptional activators GATA4 and GATA6 and by the neuronal bHLH factors ASCL1/MASH1 and NEUROD4/MATH3. The chain is Hairy/enhancer-of-split related with YRPW motif protein 1 (HEY1) from Bos taurus (Bovine).